The chain runs to 429 residues: Ribosomal RNA small subunit methyltransferase B (429 aa).

S-adenosyl-L-methionine contacts are provided by residues 254 to 260 (CAAPGGK), Asp-277, Asp-303, and Asp-322. The active-site Nucleophile is the Cys-375.

It belongs to the class I-like SAM-binding methyltransferase superfamily. RsmB/NOP family.

It localises to the cytoplasm. It carries out the reaction cytidine(967) in 16S rRNA + S-adenosyl-L-methionine = 5-methylcytidine(967) in 16S rRNA + S-adenosyl-L-homocysteine + H(+). In terms of biological role, specifically methylates the cytosine at position 967 (m5C967) of 16S rRNA. The sequence is that of Ribosomal RNA small subunit methyltransferase B from Serratia proteamaculans (strain 568).